The primary structure comprises 251 residues: NADPH-dependent oxidoreductase (251 aa).

It belongs to the flavin oxidoreductase frp family. The cofactor is FMN.

Functionally, reduces FMN, organic nitro compounds and disulfide DTNB. Involved in maintenance of the cellular redox state and the disulfide stress response. This chain is NADPH-dependent oxidoreductase (nfrA), found in Staphylococcus aureus (strain Mu50 / ATCC 700699).